Reading from the N-terminus, the 206-residue chain is uncharacterized protein (206 aa).

Disordered stretches follow at residues 38 to 88 and 160 to 206; these read RLQQ…NKNA and HQNT…SVQE. Residues 40-73 are compositionally biased toward low complexity; sequence QQQQQQQQQQQQNRTASSLQQPQQQQPISPPLFL. Ser-68 is subject to Phosphoserine. Residues 78–88 are compositionally biased toward polar residues; the sequence is TSENSNLNKNA. The span at 165–186 shows a compositional bias: low complexity; sequence SSSNPGSMSSSPPNSASSIFNS. Over residues 192–206 the composition is skewed to polar residues; the sequence is PYTSQSFNPLESVQE.

Its subcellular location is the cytoplasm. This is an uncharacterized protein from Saccharomyces cerevisiae (strain ATCC 204508 / S288c) (Baker's yeast).